The primary structure comprises 590 residues: DEAD-box ATP-dependent RNA helicase 27 (590 aa).

The tract at residues 1-92 (MAPAPATTSS…EKGNEGGSGI (92 aa)) is disordered. The span at 27–62 (SDSESEELSYDTAAADEEEGEEEAPNQMEELEEEQE) shows a compositional bias: acidic residues. Residues 40-87 (AADEEEGEEEAPNQMEELEEEQEEEKKEKKQKKEMSKEKKRKKEKGNE) adopt a coiled-coil conformation. Residues 63–76 (EEKKEKKQKKEMSK) are compositionally biased toward basic and acidic residues. Positions 96–124 (MLFSELGVSEPTARAIREMNYTYLTQIQA) match the Q motif motif. The Helicase ATP-binding domain maps to 127–302 (IPHLLNGKDV…KLSFEKNEES (176 aa)). 140–147 (AKTGSGKT) is a binding site for ATP. Residues 250 to 253 (DEAD) carry the DEAD box motif. The Helicase C-terminal domain occupies 335-488 (RFLVLYAFLK…NKVPNLQSHL (154 aa)). The interval 551 to 590 (SASKHRRKMRKVDGGRRHGISAANPYGRKGGDDKRQFARF) is disordered. The segment covering 579–590 (KGGDDKRQFARF) has biased composition (basic and acidic residues).

Belongs to the DEAD box helicase family. DDX18/HAS1 subfamily.

It catalyses the reaction ATP + H2O = ADP + phosphate + H(+). This is DEAD-box ATP-dependent RNA helicase 27 from Oryza sativa subsp. japonica (Rice).